The chain runs to 37 residues: Large ribosomal subunit protein bL36c (37 aa).

Belongs to the bacterial ribosomal protein bL36 family.

Its subcellular location is the plastid. This Epifagus virginiana (Beechdrops) protein is Large ribosomal subunit protein bL36c (rpl36).